A 384-amino-acid chain; its full sequence is DNA replication and repair protein RecF (384 aa).

43–50 (GENGSGKT) lines the ATP pocket.

Belongs to the RecF family.

The protein resides in the cytoplasm. Its function is as follows. The RecF protein is involved in DNA metabolism; it is required for DNA replication and normal SOS inducibility. RecF binds preferentially to single-stranded, linear DNA. It also seems to bind ATP. The chain is DNA replication and repair protein RecF from Brucella suis biovar 1 (strain 1330).